We begin with the raw amino-acid sequence, 377 residues long: 3-dehydroquinate synthase (377 aa).

NAD(+)-binding positions include 115–119 (GVIGD), 139–140 (TS), lysine 152, and lysine 161. Residues glutamate 194, histidine 256, and histidine 275 each contribute to the Zn(2+) site.

This sequence belongs to the sugar phosphate cyclases superfamily. Dehydroquinate synthase family. It depends on NAD(+) as a cofactor. Co(2+) serves as cofactor. The cofactor is Zn(2+).

Its subcellular location is the cytoplasm. It catalyses the reaction 7-phospho-2-dehydro-3-deoxy-D-arabino-heptonate = 3-dehydroquinate + phosphate. The protein operates within metabolic intermediate biosynthesis; chorismate biosynthesis; chorismate from D-erythrose 4-phosphate and phosphoenolpyruvate: step 2/7. Functionally, catalyzes the conversion of 3-deoxy-D-arabino-heptulosonate 7-phosphate (DAHP) to dehydroquinate (DHQ). The protein is 3-dehydroquinate synthase of Rhizobium meliloti (strain 1021) (Ensifer meliloti).